A 320-amino-acid polypeptide reads, in one-letter code: MQTRNTFSWIREEITRSISVSLMIYIITWASISSAYPIFAQQNYENPREATGRIVCANCHLANKPVDIEVPQTVLPDTVFEAVVKIPYDMQLKQVLANGKKGALNVGAVLILPEGFELAPPDRISPEMKEKIGNLSFQNYRPNKKNILVIGPVPGQKYSEITFPILAPDPATNKDVHFLKYPIYVGGNRGRGQIYPDGSKSNNTVYNATAGGIISKILRKEKGGYEITIVDASNGREVIDIIPRGLELLVSEGESIKLDQPLTSNPNVGGFGQGDAEIVLQDPLRVQGLLFFLGSVVLAQIFLVLKKKQFEKVQLSEMNF.

Positions 1 to 35 (MQTRNTFSWIREEITRSISVSLMIYIITWASISSA) are cleaved as a signal peptide. Residues Tyr-36, Cys-56, Cys-59, and His-60 each contribute to the heme site. A helical membrane pass occupies residues 286 to 306 (VQGLLFFLGSVVLAQIFLVLK).

It belongs to the cytochrome f family. The 4 large subunits of the cytochrome b6-f complex are cytochrome b6, subunit IV (17 kDa polypeptide, petD), cytochrome f and the Rieske protein, while the 4 small subunits are PetG, PetL, PetM and PetN. The complex functions as a dimer. Heme serves as cofactor.

It localises to the plastid. The protein localises to the chloroplast thylakoid membrane. Functionally, component of the cytochrome b6-f complex, which mediates electron transfer between photosystem II (PSII) and photosystem I (PSI), cyclic electron flow around PSI, and state transitions. In Crucihimalaya wallichii (Rock-cress), this protein is Cytochrome f.